Here is a 188-residue protein sequence, read N- to C-terminus: Translation machinery-associated protein 22 (188 aa).

Residues 96-167 enclose the SUI1 domain; it reads VVIKRIERSK…GVEELITQML (72 aa).

This sequence belongs to the DENR family. As to quaternary structure, interacts with the 40S ribosomal subunit.

The protein resides in the cytoplasm. This chain is Translation machinery-associated protein 22 (TMA22), found in Yarrowia lipolytica (strain CLIB 122 / E 150) (Yeast).